Consider the following 343-residue polypeptide: MKDQLLKLRDEALAAIAAAADVGAIQEMRVRYLGKKSELSQVLGGLGRLPTVEERKAMGALGNEIKQAITAALDAREAELAAAALQARLASERIDVTLPGAPVRRGHLHILNQVIHRIEEIFIAMGYEVAESRQVETDWYNFEALNIPKGHPARDAQDSLFLSEEVLLRTHTSNTQIRYMLEVARGRTPVKIICPGRVFRRDFEDATHAMMFHQVEGLVIDKGITMASLKGALTEMARALFGPDVGIRLRPSYFPFTEPSAEMDISCIFCGGKGCRTCKGSGWIEIGGSGMVHPNVLRAGGYDPEEVSGWAFGYGPERVAMLMYGIEDIRHFVNNDMRFLRQF.

Glutamate 258 provides a ligand contact to Mg(2+).

This sequence belongs to the class-II aminoacyl-tRNA synthetase family. Phe-tRNA synthetase alpha subunit type 1 subfamily. As to quaternary structure, tetramer of two alpha and two beta subunits. It depends on Mg(2+) as a cofactor.

The protein resides in the cytoplasm. The catalysed reaction is tRNA(Phe) + L-phenylalanine + ATP = L-phenylalanyl-tRNA(Phe) + AMP + diphosphate + H(+). This is Phenylalanine--tRNA ligase alpha subunit from Symbiobacterium thermophilum (strain DSM 24528 / JCM 14929 / IAM 14863 / T).